The chain runs to 74 residues: Turripeptide OL135 (74 aa).

The signal sequence occupies residues 1 to 20 (MKVPIVLMLVLLLIMPLSDG). The propeptide occupies 21-28 (YERKRXXX).

It belongs to the conopeptide P-like superfamily. In terms of processing, contains 3 disulfide bonds. As to expression, expressed by the venom duct.

The protein localises to the secreted. In terms of biological role, acts as a neurotoxin by inhibiting an ion channel. This chain is Turripeptide OL135, found in Iotyrris olangoensis (Sea snail).